Reading from the N-terminus, the 382-residue chain is Mannitol-1-phosphate 5-dehydrogenase (382 aa).

3–14 (ALHFGAGNIGRG) is a binding site for NAD(+).

It belongs to the mannitol dehydrogenase family.

The catalysed reaction is D-mannitol 1-phosphate + NAD(+) = beta-D-fructose 6-phosphate + NADH + H(+). In Pectobacterium atrosepticum (strain SCRI 1043 / ATCC BAA-672) (Erwinia carotovora subsp. atroseptica), this protein is Mannitol-1-phosphate 5-dehydrogenase.